The sequence spans 376 residues: Alanine racemase (376 aa).

K40 serves as the catalytic Proton acceptor; specific for D-alanine. K40 is subject to N6-(pyridoxal phosphate)lysine. Residue R138 participates in substrate binding. The active-site Proton acceptor; specific for L-alanine is the Y270. M317 contacts substrate.

It belongs to the alanine racemase family. It depends on pyridoxal 5'-phosphate as a cofactor.

It catalyses the reaction L-alanine = D-alanine. The protein operates within amino-acid biosynthesis; D-alanine biosynthesis; D-alanine from L-alanine: step 1/1. In terms of biological role, catalyzes the interconversion of L-alanine and D-alanine. May also act on other amino acids. This chain is Alanine racemase (alr), found in Lactobacillus acidophilus (strain ATCC 700396 / NCK56 / N2 / NCFM).